The chain runs to 250 residues: 5'-nucleotidase SurE (250 aa).

The a divalent metal cation site is built by aspartate 8, aspartate 9, serine 39, and asparagine 95.

This sequence belongs to the SurE nucleotidase family. A divalent metal cation serves as cofactor.

The protein localises to the cytoplasm. It carries out the reaction a ribonucleoside 5'-phosphate + H2O = a ribonucleoside + phosphate. Its function is as follows. Nucleotidase that shows phosphatase activity on nucleoside 5'-monophosphates. This is 5'-nucleotidase SurE from Syntrophobacter fumaroxidans (strain DSM 10017 / MPOB).